Reading from the N-terminus, the 328-residue chain is L-lactate dehydrogenase (328 aa).

NAD(+) contacts are provided by residues valine 18, glutamate 39, lysine 46, tyrosine 71, and 85–86 (GA). Substrate-binding residues include glutamine 88 and arginine 94. Residues serine 107, 124-126 (AAN), and serine 149 each bind NAD(+). Residue 126-129 (NPVD) coordinates substrate. Residue 154 to 157 (DSAR) coordinates substrate. 2 residues coordinate beta-D-fructose 1,6-bisphosphate: arginine 159 and histidine 174. Residue histidine 181 is the Proton acceptor of the active site. Tyrosine 226 is subject to Phosphotyrosine. Threonine 235 is a substrate binding site.

It belongs to the LDH/MDH superfamily. LDH family. As to quaternary structure, homotetramer.

Its subcellular location is the cytoplasm. The catalysed reaction is (S)-lactate + NAD(+) = pyruvate + NADH + H(+). It participates in fermentation; pyruvate fermentation to lactate; (S)-lactate from pyruvate: step 1/1. With respect to regulation, allosterically activated by fructose 1,6-bisphosphate (FBP). In terms of biological role, catalyzes the conversion of lactate to pyruvate. The protein is L-lactate dehydrogenase of Streptococcus pneumoniae (strain ATCC BAA-255 / R6).